The chain runs to 92 residues: YcgL domain-containing protein Sama_1929 (92 aa).

The YcgL domain maps to 1–85 (MICAVYKSSR…PKDNLLTQHR (85 aa)).

The chain is YcgL domain-containing protein Sama_1929 from Shewanella amazonensis (strain ATCC BAA-1098 / SB2B).